We begin with the raw amino-acid sequence, 308 residues long: Protein translocase subunit SecF (308 aa).

6 helical membrane-spanning segments follow: residues 12 to 32, 127 to 147, 152 to 172, 182 to 202, 234 to 254, and 262 to 282; these read YFIFSTFMILFSLFSIFTKGF, AKNALWALALGSILILIYITI, IYALSSVLALLHDVLVTIGFI, PFIAAILTILGYSMNDTIVIF, VYTSLTTLLALAALLIFGGST, and LLVGIVYGTYSSIWLASPLVY.

This sequence belongs to the SecD/SecF family. SecF subfamily. As to quaternary structure, forms a complex with SecD. Part of the essential Sec protein translocation apparatus which comprises SecA, SecYEG and auxiliary proteins SecDF. Other proteins may also be involved.

Its subcellular location is the cell inner membrane. Functionally, part of the Sec protein translocase complex. Interacts with the SecYEG preprotein conducting channel. SecDF uses the proton motive force (PMF) to complete protein translocation after the ATP-dependent function of SecA. This Sebaldella termitidis (strain ATCC 33386 / NCTC 11300) protein is Protein translocase subunit SecF.